Consider the following 171-residue polypeptide: 3-hydroxydecanoyl-[acyl-carrier-protein] dehydratase (171 aa).

His-70 is a catalytic residue.

The protein belongs to the thioester dehydratase family. FabA subfamily. In terms of assembly, homodimer.

It is found in the cytoplasm. The enzyme catalyses a (3R)-hydroxyacyl-[ACP] = a (2E)-enoyl-[ACP] + H2O. It carries out the reaction (3R)-hydroxydecanoyl-[ACP] = (2E)-decenoyl-[ACP] + H2O. The catalysed reaction is (2E)-decenoyl-[ACP] = (3Z)-decenoyl-[ACP]. It participates in lipid metabolism; fatty acid biosynthesis. In terms of biological role, necessary for the introduction of cis unsaturation into fatty acids. Catalyzes the dehydration of (3R)-3-hydroxydecanoyl-ACP to E-(2)-decenoyl-ACP and then its isomerization to Z-(3)-decenoyl-ACP. Can catalyze the dehydratase reaction for beta-hydroxyacyl-ACPs with saturated chain lengths up to 16:0, being most active on intermediate chain length. The protein is 3-hydroxydecanoyl-[acyl-carrier-protein] dehydratase of Xanthomonas axonopodis pv. citri (strain 306).